We begin with the raw amino-acid sequence, 207 residues long: Dephospho-CoA kinase (207 aa).

A DPCK domain is found at 11 to 207; it reads RIGLTGGIAS…LLKMSPTAEL (197 aa). 19–24 serves as a coordination point for ATP; sequence ASGKSS.

This sequence belongs to the CoaE family.

It localises to the cytoplasm. It catalyses the reaction 3'-dephospho-CoA + ATP = ADP + CoA + H(+). The protein operates within cofactor biosynthesis; coenzyme A biosynthesis; CoA from (R)-pantothenate: step 5/5. Its function is as follows. Catalyzes the phosphorylation of the 3'-hydroxyl group of dephosphocoenzyme A to form coenzyme A. The sequence is that of Dephospho-CoA kinase from Synechococcus sp. (strain CC9605).